The following is a 21-amino-acid chain: Brevinin-1OKb (21 aa).

At Lys-21 the chain carries Lysine amide.

Expressed by the skin glands.

It is found in the secreted. Its function is as follows. Antimicrobial peptide. This chain is Brevinin-1OKb, found in Nidirana okinavana (Kampira Falls frog).